Consider the following 258-residue polypeptide: Tryptophan synthase alpha chain (258 aa).

Active-site proton acceptor residues include Glu52 and Asp63.

Belongs to the TrpA family. In terms of assembly, tetramer of two alpha and two beta chains.

The catalysed reaction is (1S,2R)-1-C-(indol-3-yl)glycerol 3-phosphate + L-serine = D-glyceraldehyde 3-phosphate + L-tryptophan + H2O. The protein operates within amino-acid biosynthesis; L-tryptophan biosynthesis; L-tryptophan from chorismate: step 5/5. In terms of biological role, the alpha subunit is responsible for the aldol cleavage of indoleglycerol phosphate to indole and glyceraldehyde 3-phosphate. This Streptococcus pneumoniae (strain P1031) protein is Tryptophan synthase alpha chain.